We begin with the raw amino-acid sequence, 594 residues long: Protein REBELOTE (594 aa).

The span at Met-1–Lys-13 shows a compositional bias: basic residues. Disordered regions lie at residues Met-1–Lys-21 and Ala-35–Arg-58. 3 short sequence motifs (nuclear localization signal) span residues Ala-8–Asn-15, Ala-35–Gln-42, and Leu-512–Ser-519. A compositionally biased stretch (basic and acidic residues) spans Lys-36–Arg-58.

It belongs to the NOC2 family. Interacts with SWA2, NOC2 and NOC3 in both the nucleolus and nucleoplasm. Binds to ENAP1 and OBE1. Expressed at low levels in roots, shoots, leaves, stems, inflorescences, flowers and siliques, with highest levels dividing tissues.

It localises to the nucleus. The protein resides in the nucleolus. Its subcellular location is the nucleoplasm. Functionally, collaboratively with CYP40/SQN and ULT1, influences floral meristem (FM) determinacy in an AGAMOUS and SUPERMAN-dependent manner, thus contributing to the floral developmental homeostasis. The protein is Protein REBELOTE of Arabidopsis thaliana (Mouse-ear cress).